The following is a 102-amino-acid chain: Small ribosomal subunit protein uS10 (102 aa).

This sequence belongs to the universal ribosomal protein uS10 family. Part of the 30S ribosomal subunit.

In terms of biological role, involved in the binding of tRNA to the ribosomes. The sequence is that of Small ribosomal subunit protein uS10 from Streptococcus mutans serotype c (strain ATCC 700610 / UA159).